The sequence spans 500 residues: Cobyric acid synthase (500 aa).

The 190-residue stretch at 255–444 (AIDIAVIRCP…MHDLFHNDAF (190 aa)) folds into the GATase cobBQ-type domain. Cys337 (nucleophile) is an active-site residue. The active site involves His436.

Belongs to the CobB/CobQ family. CobQ subfamily.

It participates in cofactor biosynthesis; adenosylcobalamin biosynthesis. Functionally, catalyzes amidations at positions B, D, E, and G on adenosylcobyrinic A,C-diamide. NH(2) groups are provided by glutamine, and one molecule of ATP is hydrogenolyzed for each amidation. The polypeptide is Cobyric acid synthase (Geobacillus thermodenitrificans (strain NG80-2)).